The sequence spans 212 residues: Interleukin-6 (212 aa).

A signal peptide spans 1 to 29 (MNSFSTSAFGPVAFSLGLLLVLPAAFPAP). A disulfide bridge connects residues C72 and C78. An N-linked (GlcNAc...) asparagine glycan is attached at N73. Phosphoserine; by FAM20C is present on S81. A disulfide bridge links C101 with C111.

This sequence belongs to the IL-6 superfamily. Component of a hexamer of two molecules each of IL6, IL6R and IL6ST; first binds to IL6R to associate with the signaling subunit IL6ST. Interacts with IL6R (via the N-terminal ectodomain); this interaction may be affected by IL6R-binding with SORL1, hence decreasing IL6 cis signaling. Interacts with SORL1 (via the N-terminal ectodomain); this interaction leads to IL6 internalization and lysosomal degradation. May form a trimeric complex with the soluble SORL1 ectodomain and soluble IL6R receptor; this interaction might stabilize circulating IL6, hence promoting IL6 trans signaling. In terms of processing, N- and O-glycosylated. Produced by skeletal muscle.

It is found in the secreted. Its function is as follows. Cytokine with a wide variety of biological functions in immunity, tissue regeneration, and metabolism. Binds to IL6R, then the complex associates to the signaling subunit IL6ST/gp130 to trigger the intracellular IL6-signaling pathway. The interaction with the membrane-bound IL6R and IL6ST stimulates 'classic signaling', whereas the binding of IL6 and soluble IL6R to IL6ST stimulates 'trans-signaling'. Alternatively, 'cluster signaling' occurs when membrane-bound IL6:IL6R complexes on transmitter cells activate IL6ST receptors on neighboring receiver cells. Functionally, IL6 is a potent inducer of the acute phase response. Rapid production of IL6 contributes to host defense during infection and tissue injury, but excessive IL6 synthesis is involved in disease pathology. In the innate immune response, is synthesized by myeloid cells, such as macrophages and dendritic cells, upon recognition of pathogens through toll-like receptors (TLRs) at the site of infection or tissue injury. In the adaptive immune response, is required for the differentiation of B cells into immunoglobulin-secreting cells. Plays a major role in the differentiation of CD4(+) T cell subsets. Essential factor for the development of T follicular helper (Tfh) cells that are required for the induction of germinal-center formation. Required to drive naive CD4(+) T cells to the Th17 lineage. Also required for proliferation of myeloma cells and the survival of plasmablast cells. Acts as an essential factor in bone homeostasis and on vessels directly or indirectly by induction of VEGF, resulting in increased angiogenesis activity and vascular permeability. Induces, through 'trans-signaling' and synergistically with IL1B and TNF, the production of VEGF. Involved in metabolic controls, is discharged into the bloodstream after muscle contraction increasing lipolysis and improving insulin resistance. 'Trans-signaling' in central nervous system also regulates energy and glucose homeostasis. Mediates, through GLP-1, crosstalk between insulin-sensitive tissues, intestinal L cells and pancreatic islets to adapt to changes in insulin demand. Also acts as a myokine. Plays a protective role during liver injury, being required for maintenance of tissue regeneration. Also has a pivotal role in iron metabolism by regulating HAMP/hepcidin expression upon inflammation or bacterial infection. Through activation of IL6ST-YAP-NOTCH pathway, induces inflammation-induced epithelial regeneration. This Homo sapiens (Human) protein is Interleukin-6.